The chain runs to 136 residues: uncharacterized protein (136 aa).

Widely expressed.

This is an uncharacterized protein from Homo sapiens (Human).